The sequence spans 688 residues: Translation initiation factor IF-2 (688 aa).

Composition is skewed to basic and acidic residues over residues 53 to 62 (GKEKSEKTKE) and 86 to 95 (KRDDKNEKVN). A disordered region spans residues 53 to 100 (GKEKSEKTKEEDDEIETTAKNPIKESMNNKKSNKRDDKNEKVNTENAE). In terms of domain architecture, tr-type G spans 187-354 (KRSPIITVMG…MILLSSEILE (168 aa)). Residues 196 to 203 (GHVDHGKT) are G1. 196-203 (GHVDHGKT) contacts GTP. Residues 221–225 (GITQH) are G2. The G3 stretch occupies residues 242 to 245 (DTPG). Residues 242-246 (DTPGH) and 296-299 (NKID) each bind GTP. A G4 region spans residues 296–299 (NKID). A G5 region spans residues 332–334 (SAH).

This sequence belongs to the TRAFAC class translation factor GTPase superfamily. Classic translation factor GTPase family. IF-2 subfamily.

It localises to the cytoplasm. In terms of biological role, one of the essential components for the initiation of protein synthesis. Protects formylmethionyl-tRNA from spontaneous hydrolysis and promotes its binding to the 30S ribosomal subunits. Also involved in the hydrolysis of GTP during the formation of the 70S ribosomal complex. This chain is Translation initiation factor IF-2, found in Clostridium botulinum (strain ATCC 19397 / Type A).